We begin with the raw amino-acid sequence, 166 residues long: Peptidyl-prolyl cis-trans isomerase-like 1 (166 aa).

The PPIase cyclophilin-type domain occupies 10-164 (QPPNVYLETS…DDVKIIKAYP (155 aa)). Cyclosporin A is bound by residues 54 to 65 (HRIIKDFMIQGG), 70 to 71 (TG), 99 to 104 (AMANAG), 109 to 113 (GSQFF), Thr119, and Lys125. Position 149 is a phosphoserine (Ser149).

This sequence belongs to the cyclophilin-type PPIase family. PPIL1 subfamily. As to quaternary structure, identified in the spliceosome C complex. Interacts with SNW1/SKIP. Interacts with CDC40/PRP17; this interaction leads to CDC40 isomerization. Interacts with RBM22.

The protein resides in the nucleus. The catalysed reaction is [protein]-peptidylproline (omega=180) = [protein]-peptidylproline (omega=0). Its activity is regulated as follows. Inhibited by Cyclosporin A. Functionally, involved in pre-mRNA splicing as component of the spliceosome. PPIases accelerate the folding of proteins. It catalyzes the cis-trans isomerization of proline imidic peptide bonds in oligopeptides. Catalyzes prolyl peptide bond isomerization in CDC40/PRP17. Plays an important role in embryonic brain development; this function is independent of its isomerase activity. The protein is Peptidyl-prolyl cis-trans isomerase-like 1 (PPIL1) of Bos taurus (Bovine).